Reading from the N-terminus, the 114-residue chain is Cyclin-dependent kinase 2-associated protein 1 (114 aa).

The interval 18 to 57 is disordered; the sequence is AGSVHSPSTSMATSSQYRQLLSDYGPPSLGYTQGTGNSQV. The segment at 19-24 is interaction with CDK2AP2; the sequence is GSVHSP. The span at 20–36 shows a compositional bias: polar residues; it reads SVHSPSTSMATSSQYRQ. Serine 45 carries the phosphoserine; by IKKE modification. A compositionally biased stretch (polar residues) spans 47-57; it reads GYTQGTGNSQV.

The protein belongs to the CDK2AP family. Homodimer. Component of the nucleosome remodeling and deacetylase (NuRD) repressor complex, composed of core proteins MTA1, MTA2, MTA3, RBBP4, RBBP7, HDAC1, HDAC2, MBD2, MBD3, and peripherally associated proteins CDK2AP1, CDK2AP2, GATAD2A, GATAD2B, CHD3, CHD4 and CHD5. The exact stoichiometry of the NuRD complex is unknown, and some subunits such as MBD2 and MBD3, GATAD2A and GATAD2B, and CHD3, CHD4 and CHD5 define mutually exclusive NuRD complexes. Interacts with monomeric unphosphorylated CDK2. Interacts with CDK2AP2. Interacts with GATAD2A. Interacts with HDAC1. Interacts with HDAC2. Interacts with MBD2. Interacts with MBD3. Interacts with RBBP4. Interacts with RBBP7. Post-translationally, phosphorylated in vitro by IKBKE at Ser-45.

Its subcellular location is the nucleus. It is found in the chromosome. Functionally, inhibitor of cyclin-dependent kinase CDK2. Also acts as a component of the histone deacetylase NuRD complex which participates in the remodeling of chromatin. The sequence is that of Cyclin-dependent kinase 2-associated protein 1 (Cdk2ap1) from Mus musculus (Mouse).